Consider the following 564-residue polypeptide: Septin-9 (564 aa).

N-acetylmethionine is present on Met-1. Ser-12 is modified (phosphoserine). 2 positions are modified to phosphothreonine: Thr-24 and Thr-31. Disordered stretches follow at residues Val-38–Asp-165 and Pro-178–Val-224. Lys-44 is subject to N6-acetyllysine. A phosphoserine mark is found at Ser-64, Ser-67, and Ser-71. Residues Asp-95–Gly-109 are compositionally biased toward polar residues. The segment covering Lys-116 to Glu-134 has biased composition (basic and acidic residues). Thr-125 carries the post-translational modification Phosphothreonine. Positions Thr-190–Ser-203 are enriched in polar residues. Tyr-258 is modified (phosphotyrosine). Residues Gln-275–Glu-546 enclose the Septin-type G domain. The tract at residues Gly-285–Ser-292 is G1 motif. Gly-285–Ser-292 lines the GTP pocket. Phosphoserine is present on residues Ser-307 and Ser-312. GTP is bound by residues Thr-319, Gly-345, Lys-425–Glu-433, Gly-480, and Arg-495. Positions Asp-342–Gly-345 are G3 motif. Residues Ala-424–Asp-427 form a G4 motif region.

Belongs to the TRAFAC class TrmE-Era-EngA-EngB-Septin-like GTPase superfamily. Septin GTPase family. Septins polymerize into heterooligomeric protein complexes that form filaments, and associate with cellular membranes, actin filaments, and microtubules. GTPase activity is required for filament formation. Interacts with SEPTIN2, SEPTIN6, SEPTIN7, SEPTIN11 and SEPTIN14. Interacts with RTKN and ARHGEF18. As to expression, expressed in the brain, mainly in the perikarya and processes of astrocytes in the cerebellum, dentate gyrus and corpus callosum (at protein level). In the sciatic nerve, highly expressed in Schwann cells (at protein level). Isoforms are differentially expressed in testes, kidney, liver, heart, spleen and brain. Undetectable in skeletal muscle.

It is found in the cytoplasm. Its subcellular location is the cytoskeleton. Filament-forming cytoskeletal GTPase. May play a role in cytokinesis (Potential). The polypeptide is Septin-9 (Rattus norvegicus (Rat)).